Consider the following 416-residue polypeptide: Glutamyl-tRNA reductase (416 aa).

Substrate contacts are provided by residues Thr-48 to Arg-51, Ser-104, Glu-109 to Gln-111, and Gln-115. The active-site Nucleophile is Cys-49. Gly-184–Ile-189 provides a ligand contact to NADP(+).

The protein belongs to the glutamyl-tRNA reductase family. In terms of assembly, homodimer.

The enzyme catalyses (S)-4-amino-5-oxopentanoate + tRNA(Glu) + NADP(+) = L-glutamyl-tRNA(Glu) + NADPH + H(+). Its pathway is porphyrin-containing compound metabolism; protoporphyrin-IX biosynthesis; 5-aminolevulinate from L-glutamyl-tRNA(Glu): step 1/2. In terms of biological role, catalyzes the NADPH-dependent reduction of glutamyl-tRNA(Glu) to glutamate 1-semialdehyde (GSA). The chain is Glutamyl-tRNA reductase from Dechloromonas aromatica (strain RCB).